Reading from the N-terminus, the 239-residue chain is Probable transcriptional regulatory protein lmo0369 (239 aa).

This sequence belongs to the TACO1 family. YeeN subfamily.

It is found in the cytoplasm. The polypeptide is Probable transcriptional regulatory protein lmo0369 (Listeria monocytogenes serovar 1/2a (strain ATCC BAA-679 / EGD-e)).